We begin with the raw amino-acid sequence, 93 residues long: Small ribosomal subunit protein uS19 (93 aa).

This sequence belongs to the universal ribosomal protein uS19 family.

Its function is as follows. Protein S19 forms a complex with S13 that binds strongly to the 16S ribosomal RNA. In Latilactobacillus sakei subsp. sakei (strain 23K) (Lactobacillus sakei subsp. sakei), this protein is Small ribosomal subunit protein uS19.